Here is a 102-residue protein sequence, read N- to C-terminus: ATP-dependent Clp protease adapter protein ClpS (102 aa).

It belongs to the ClpS family. As to quaternary structure, binds to the N-terminal domain of the chaperone ClpA.

In terms of biological role, involved in the modulation of the specificity of the ClpAP-mediated ATP-dependent protein degradation. The protein is ATP-dependent Clp protease adapter protein ClpS of Nitrosospira multiformis (strain ATCC 25196 / NCIMB 11849 / C 71).